A 284-amino-acid chain; its full sequence is Proton-translocating ferredoxin:NAD(+) oxidoreductase complex subunit B (284 aa).

Residues 1 to 26 (MNTVIMILVVMTIIGLIFGLVLAYVN) form a hydrophobic region. Positions 32-92 (EVNPLVDLVE…AEQVAKLTGK (61 aa)) constitute a 4Fe-4S domain. [4Fe-4S] cluster is bound by residues cysteine 49, cysteine 52, cysteine 57, cysteine 75, cysteine 138, cysteine 142, cysteine 148, cysteine 152, cysteine 172, cysteine 175, cysteine 178, cysteine 182, cysteine 217, cysteine 220, cysteine 223, cysteine 227, cysteine 246, cysteine 249, cysteine 254, and cysteine 258. 4Fe-4S ferredoxin-type domains lie at 133–162 (GGPKACKYGCLGFGTCVKSCPFGAMAMGSN), 163–192 (GLPIIDTDICTGCGTCVSACPKQVLGFRPV), 206–237 (GGAVRKACSVGCLGCGLCAKNCPNDAIKVENN), and 239–269 (AVVDQSICASCSEATCLAKCPTGAIKAIVSG).

This sequence belongs to the 4Fe4S bacterial-type ferredoxin family. RnfB subfamily. As to quaternary structure, the complex is composed of six subunits: RnfA, RnfB, RnfC, RnfD, RnfE and RnfG. Requires [4Fe-4S] cluster as cofactor.

It is found in the cell membrane. In terms of biological role, part of a membrane-bound complex that couples electron transfer with translocation of ions across the membrane. Couples electron transfer from reduced ferredoxin to NAD(+) with translocation of H(+) out of the cell. Essential for energy conservation during autotrophic growth. Contributes to ATP synthesis during heterotrophic growth. The chain is Proton-translocating ferredoxin:NAD(+) oxidoreductase complex subunit B from Clostridium ljungdahlii (strain ATCC 55383 / DSM 13528 / PETC).